Reading from the N-terminus, the 470-residue chain is Protein escargot (470 aa).

The tract at residues 271–309 (LNLNTSQPGEQAAAKTGDMSPETMPNASAKKDKNQPPRY) is disordered. C2H2-type zinc fingers lie at residues 309–331 (YQCP…QQFH), 344–366 (FSCK…IRTH), 370–392 (CKCN…IRTH), and 398–420 (FSCQ…LQTH). A C2H2-type 5; atypical zinc finger spans residues 426–449 (YSCTSCSKTFSRMSLLTKHSEGGC). A disordered region spans residues 448–470 (GCPGGSAGSSSSSELNYAGYAEP).

This sequence belongs to the snail C2H2-type zinc-finger protein family. Expression is complex and dynamic. In early embryogenesis, expression begins on the dorsal side of the embryo. Expressed in a pattern of longitudinal stripes early in germband elongation. Later in embryogenesis, expression is in cells that correspond to the wing, haltere, leg and genital imaginal disks and the abdominal histoblasts. In the embryonic leg disk, expression is restricted to imaginal cells. Also expressed in the central nervous system (CNS), tracheae and head of stage 14 embryos. CNS and tracheal expression decays during later stages, though head expression persists until late in embryogenesis. In third instar larvae, expression is seen in the brain and in regions of many imaginal tissues including the eye-antennal, wing, leg and haltere disks. Expressed in embryonic, larval and adult male germline stem cells and in the somatic cells of the embryonic gonads.

It is found in the nucleus. Functionally, transcription factor that can both stimulate and repress transcription. Binds to the consensus DNA sequence 5'-A/GCAGGTG-3'. Regulates cell motility and adhesion during tracheal morphogenesis by stimulating transcription of the DE-cadherin gene shg at branch tips, thereby promoting tracheal tube fusion. Maintains diploidy in imaginal cells by inhibiting the transcription of genes required for endoreplication. Required for development of the genital disk and acts as an intrinsic determinant of wing cell fate. The somatic protein is required for maintenance of male germ cells. Acts with other members of the snail protein family to control embryonic central nervous system development. The polypeptide is Protein escargot (esg) (Drosophila melanogaster (Fruit fly)).